A 150-amino-acid polypeptide reads, in one-letter code: Catabolic 3-dehydroquinase (150 aa).

Y24 functions as the Proton acceptor in the catalytic mechanism. Substrate is bound by residues N75, H81, and D88. The active-site Proton donor is the H101. Substrate-binding positions include 102 to 103 (VS) and R112.

Belongs to the type-II 3-dehydroquinase family. Homododecamer. Adopts a ring-like structure, composed of an arrangement of two hexameric rings stacked on top of one another.

The enzyme catalyses 3-dehydroquinate = 3-dehydroshikimate + H2O. Its pathway is aromatic compound metabolism; 3,4-dihydroxybenzoate biosynthesis; 3,4-dihydroxybenzoate from 3-dehydroquinate: step 1/2. Is involved in the catabolism of quinate. Allows the utilization of quinate as carbon source via the beta-ketoadipate pathway. This is Catabolic 3-dehydroquinase from Aspergillus clavatus (strain ATCC 1007 / CBS 513.65 / DSM 816 / NCTC 3887 / NRRL 1 / QM 1276 / 107).